A 358-amino-acid chain; its full sequence is Leukotriene B4 receptor 2 (358 aa).

Residues methionine 1–threonine 24 are Extracellular-facing. Asparagine 10 is a glycosylation site (N-linked (GlcNAc...) asparagine). The chain crosses the membrane as a helical span at residues alanine 25–leucine 45. Residues alanine 46–leucine 60 are Cytoplasmic-facing. Residues valine 61–phenylalanine 81 form a helical membrane-spanning segment. Residues leucine 82–alanine 96 are Extracellular-facing. Residues valine 97 to leucine 117 traverse the membrane as a helical segment. Topologically, residues glutamine 118 to arginine 140 are cytoplasmic. Residues leucine 141 to histidine 161 form a helical membrane-spanning segment. Residues leucine 162–glutamate 185 lie on the Extracellular side of the membrane. The chain crosses the membrane as a helical span at residues threonine 186–alanine 206. Topologically, residues arginine 207–arginine 224 are cytoplasmic. The chain crosses the membrane as a helical span at residues leucine 225–leucine 245. At leucine 246 to alanine 275 the chain is on the extracellular side. A helical transmembrane segment spans residues leucine 276–leucine 296. At proline 297–leucine 358 the chain is on the cytoplasmic side. The tract at residues serine 311–leucine 358 is disordered. Residues glutamine 338–glycine 348 show a composition bias toward gly residues. Positions methionine 349 to leucine 358 are enriched in basic and acidic residues.

The protein belongs to the G-protein coupled receptor 1 family. In terms of tissue distribution, widely expressed.

Its subcellular location is the cell membrane. Low-affinity receptor for leukotrienes including leukotriene B4. Mediates chemotaxis of granulocytes and macrophages. The response is mediated via G-proteins that activate a phosphatidylinositol-calcium second messenger system. The rank order of affinities for the leukotrienes is LTB4 &gt; 12-epi-LTB4 &gt; LTB5 &gt; LTB3. This is Leukotriene B4 receptor 2 (LTB4R2) from Homo sapiens (Human).